Reading from the N-terminus, the 551-residue chain is Membrane protein insertase YidC (551 aa).

The helical transmembrane segment at 3-23 (ANHIRILLLVTIAIMFISLMG) threads the bilayer. Residues 33 to 47 (NTKQQTSATQNNSHY) show a composition bias toward polar residues. Positions 33–59 (NTKQQTSATQNNSHYDNADSSTNTDVT) are disordered. Residues 50–59 (ADSSTNTDVT) show a composition bias toward low complexity. 3 helical membrane-spanning segments follow: residues 361–381 (LVGN…LIFY), 431–451 (LSGC…YWVL), and 504–524 (VMMF…SGLV).

Belongs to the OXA1/ALB3/YidC family. Type 1 subfamily. In terms of assembly, interacts with the Sec translocase complex via SecD. Specifically interacts with transmembrane segments of nascent integral membrane proteins during membrane integration.

Its subcellular location is the cell inner membrane. In terms of biological role, required for the insertion and/or proper folding and/or complex formation of integral membrane proteins into the membrane. Involved in integration of membrane proteins that insert both dependently and independently of the Sec translocase complex, as well as at least some lipoproteins. Aids folding of multispanning membrane proteins. This Francisella tularensis subsp. tularensis (strain SCHU S4 / Schu 4) protein is Membrane protein insertase YidC.